The primary structure comprises 462 residues: Metal cation symporter ZIP14 (462 aa).

Residues 1–16 (MPLLLLSALLPFSLMA) form the signal peptide. Topologically, residues 17–138 (GPTPSTGKEL…PSPGEVWGYG (122 aa)) are extracellular. N-linked (GlcNAc...) asparagine glycans are attached at residues asparagine 42, asparagine 68, asparagine 83, and asparagine 119. The helical transmembrane segment at 139–159 (FLCVTVISLCSLFGAGVVPFM) threads the bilayer. At 160–167 (KKACYKRL) the chain is on the cytoplasmic side. The chain crosses the membrane as a helical span at residues 168–188 (LLFCIALAIGTLFSNALFQLI). Residues 189–201 (PEAFGFNPLEDSY) lie on the Extracellular side of the membrane. Residues 202–222 (VFTSSVIFGGFYLFFFTEKVL) form a helical membrane-spanning segment. At 223–322 (KMMLKQKHEH…SDGLHNFIDG (100 aa)) the chain is on the cytoplasmic side. The short motif at 230–237 (HEHGHSHY) is the HHHGHXHX-motif element. The segment at 235–285 (SHYSADTSKRDAEEGVTEKLQNGDLDHMIPPPHGSESDLRGDEKAVQQQDL) is disordered. Basic and acidic residues-rich tracts occupy residues 241-251 (TSKRDAEEGVT) and 269-279 (SESDLRGDEKA). A helical membrane pass occupies residues 323–343 (LAIGASFTVSVFQGVSTSIAI). The Extracellular portion of the chain corresponds to 344–367 (LCEEFPHELGDFVILLNAGMSIPQ). The XEXPHE-motif signature appears at 346-351 (EEFPHE). A helical transmembrane segment spans residues 368-388 (ALFFNFLSACCCYLGLAFGIL). Residues 389 to 396 (AGSHFSSN) lie on the Cytoplasmic side of the membrane. Residues 397–417 (WIFALAGGMFLYIALSDMFPE) form a helical membrane-spanning segment. Topologically, residues 418–431 (MNEVSKEDEEGGRA) are extracellular. The helical transmembrane segment at 432–452 (FSAFMIQNAGLLTGFAIMLLL) threads the bilayer. Residues 453–462 (TTFSGQIQLG) are Cytoplasmic-facing.

This sequence belongs to the ZIP transporter (TC 2.A.5) family. Homotrimer.

Its subcellular location is the cell membrane. It localises to the apical cell membrane. The protein localises to the basolateral cell membrane. The protein resides in the early endosome membrane. It is found in the late endosome membrane. Its subcellular location is the lysosome membrane. The enzyme catalyses Zn(2+)(out) + 2 hydrogencarbonate(out) = Zn(2+)(in) + 2 hydrogencarbonate(in). It catalyses the reaction Mn(2+)(out) + 2 hydrogencarbonate(out) = Mn(2+)(in) + 2 hydrogencarbonate(in). It carries out the reaction Fe(2+)(out) + 2 hydrogencarbonate(out) = Fe(2+)(in) + 2 hydrogencarbonate(in). The catalysed reaction is Cd(2+)(out) + 2 hydrogencarbonate(out) = Cd(2+)(in) + 2 hydrogencarbonate(in). Functionally, electroneutral transporter of the plasma membrane mediating the cellular uptake of the divalent metal cations zinc, manganese and iron that are important for tissue homeostasis, metabolism, development and immunity. Functions as an energy-dependent symporter, transporting through the membranes an electroneutral complex composed of a divalent metal cation and two bicarbonate anions. Beside these endogenous cellular substrates, can also import cadmium a non-essential metal which is cytotoxic and carcinogenic. This chain is Metal cation symporter ZIP14, found in Xenopus tropicalis (Western clawed frog).